The chain runs to 379 residues: Succinyl-diaminopimelate desuccinylase (379 aa).

H68 is a binding site for Zn(2+). Residue D70 is part of the active site. D101 contacts Zn(2+). E135 (proton acceptor) is an active-site residue. Zn(2+)-binding residues include E136, E164, and H350.

Belongs to the peptidase M20A family. DapE subfamily. In terms of assembly, homodimer. It depends on Zn(2+) as a cofactor. Requires Co(2+) as cofactor.

The enzyme catalyses N-succinyl-(2S,6S)-2,6-diaminopimelate + H2O = (2S,6S)-2,6-diaminopimelate + succinate. It functions in the pathway amino-acid biosynthesis; L-lysine biosynthesis via DAP pathway; LL-2,6-diaminopimelate from (S)-tetrahydrodipicolinate (succinylase route): step 3/3. In terms of biological role, catalyzes the hydrolysis of N-succinyl-L,L-diaminopimelic acid (SDAP), forming succinate and LL-2,6-diaminopimelate (DAP), an intermediate involved in the bacterial biosynthesis of lysine and meso-diaminopimelic acid, an essential component of bacterial cell walls. In Bordetella pertussis (strain Tohama I / ATCC BAA-589 / NCTC 13251), this protein is Succinyl-diaminopimelate desuccinylase.